The sequence spans 342 residues: MTIALTGGGTGGHLAIVRCLLESAIKKNIECVYIGSQNGQDKAWFENEVRFKEKFFLSSKGVVNQSKFGKISSLLHTLKLSKDCREIFKKYHIQAVFSVGGYSAAPASFAALFSHLPLFIHEQNSKSGSLNMLLKPFATKFFSAFEKEISPYPVADKFFDNARIRKELKNIIFLGGSQGAQFINELALNLAPKLQEQNIKIIHQCGKNDFEKCKKHYQSLNIQADIFDFSLNLEEKMKNADLAISRAGASTLFELCANTLPTIFIPYPYAAKNHQYFNAKFLQDQALCQIFMQNSINLDEFFKSILKLNLENISTRLQNITQKNGADMLIQKALFDNLTFIR.

Residues Thr10 to Gly12, Asn124, Ser177, and Gln275 each bind UDP-N-acetyl-alpha-D-glucosamine.

The protein belongs to the glycosyltransferase 28 family. MurG subfamily.

Its subcellular location is the cell inner membrane. It catalyses the reaction di-trans,octa-cis-undecaprenyl diphospho-N-acetyl-alpha-D-muramoyl-L-alanyl-D-glutamyl-meso-2,6-diaminopimeloyl-D-alanyl-D-alanine + UDP-N-acetyl-alpha-D-glucosamine = di-trans,octa-cis-undecaprenyl diphospho-[N-acetyl-alpha-D-glucosaminyl-(1-&gt;4)]-N-acetyl-alpha-D-muramoyl-L-alanyl-D-glutamyl-meso-2,6-diaminopimeloyl-D-alanyl-D-alanine + UDP + H(+). It participates in cell wall biogenesis; peptidoglycan biosynthesis. Its function is as follows. Cell wall formation. Catalyzes the transfer of a GlcNAc subunit on undecaprenyl-pyrophosphoryl-MurNAc-pentapeptide (lipid intermediate I) to form undecaprenyl-pyrophosphoryl-MurNAc-(pentapeptide)GlcNAc (lipid intermediate II). The sequence is that of UDP-N-acetylglucosamine--N-acetylmuramyl-(pentapeptide) pyrophosphoryl-undecaprenol N-acetylglucosamine transferase from Campylobacter jejuni subsp. jejuni serotype O:6 (strain 81116 / NCTC 11828).